Consider the following 82-residue polypeptide: Myosin light chain alkali (82 aa).

The EF-hand domain maps to 7 to 42 (GCYEDFIECLKLYDKEENGTMLLAELQHALLALGEN).

As to quaternary structure, myosin is a hexamer of 2 heavy chains and 4 light chains.

This is Myosin light chain alkali (Mlc1) from Drosophila teissieri (Fruit fly).